An 83-amino-acid polypeptide reads, in one-letter code: Hainantoxin-III (83 aa).

The N-terminal stretch at 1-21 is a signal peptide; it reads MKASMFLALAGLVLLFVVGYA. The propeptide occupies 22–48; the sequence is SESEEKEFPRELLSKIFALDDFKGEER. 3 disulfide bridges follow: C50/C65, C57/C70, and C64/C77. Position 81 is a leucine amide (L81).

The protein belongs to the neurotoxin 10 (Hwtx-1) family. 15 (Hntx-3) subfamily. In terms of assembly, monomer. As to expression, expressed by the venom gland.

The protein localises to the secreted. Functionally, selective antagonist of neuronal tetrodotoxin (TTX)-sensitive voltage-gated sodium channels (IC(50)=1270 nM on Nav1.1/SCN1A, 270 nM on Nav1.2/SCN2A, 491 nM on Nav1.3/SCN3A and 232 nM on Nav1.7/SCN9A). This toxin suppress Nav1.7 current amplitude without significantly altering the activation, inactivation, and repriming kinetics. Short extreme depolarizations partially activate the toxin-bound channel, indicating voltage-dependent inhibition of this toxin. This toxin increases the deactivation of the Nav1.7 current after extreme depolarizations. The toxin-Nav1.7 complex is gradually dissociated upon prolonged strong depolarizations in a voltage-dependent manner, and the unbound toxin rebinds to Nav1.7 after a long repolarization. Moreover, analysis of chimeric channels showed that the DIIS3-S4 linker is critical for toxin binding to Nav1.7. These data are consistent with this toxin interacting with Nav1.7 site 4 and trapping the domain II voltage sensor in the closed state. In Cyriopagopus hainanus (Chinese bird spider), this protein is Hainantoxin-III.